The primary structure comprises 302 residues: uncharacterized protein (302 aa).

Transmembrane regions (helical) follow at residues 13-32, 42-64, 77-96, 106-125, 132-150, 154-171, 183-202, 217-239, 246-265, and 275-297; these read GILLAISAYTMWGIAPIYFK, ILSHRVVWSFVLLAVLIHLGRRW, FWLLLVTALLVGGNWLIFIW, ASLGYYINPLLNVLLGMLFL, LQWFAVALAAIGVGIQLVV, VPIVAIALATSFGFYGLL, LFLETLFMLPAAAIYLIWLA, NLLLVCAGVVTTLPLLCFTGAAA, LGFFQYIGPSLMFLLAVLVY, and ITFAFIWSALVIFSVDGLKAGHA. In terms of domain architecture, EamA spans 22 to 149; sequence TMWGIAPIYF…AAIGVGIQLV (128 aa).

The protein belongs to the EamA transporter family.

The protein resides in the cell membrane. This is an uncharacterized protein from Vibrio cholerae serotype O1 (strain ATCC 39315 / El Tor Inaba N16961).